Reading from the N-terminus, the 552-residue chain is Chaperonin GroEL (552 aa).

ATP contacts are provided by residues 29-32 (TAGP), Lys50, 86-90 (DGTTT), Gly417, and Asp499.

Belongs to the chaperonin (HSP60) family. As to quaternary structure, forms a cylinder of 14 subunits composed of two heptameric rings stacked back-to-back. Interacts with the co-chaperonin GroES.

Its subcellular location is the cytoplasm. It catalyses the reaction ATP + H2O + a folded polypeptide = ADP + phosphate + an unfolded polypeptide.. Functionally, together with its co-chaperonin GroES, plays an essential role in assisting protein folding. The GroEL-GroES system forms a nano-cage that allows encapsulation of the non-native substrate proteins and provides a physical environment optimized to promote and accelerate protein folding. The polypeptide is Chaperonin GroEL (Ehrlichia canis (strain Jake)).